The primary structure comprises 638 residues: XK-related protein 6 (638 aa).

2 disordered regions span residues Val24–Gly43 and Arg82–Pro117. The span at Pro33–Gly43 shows a compositional bias: gly residues. 7 consecutive transmembrane segments (helical) span residues Leu127 to Ala147, Cys158 to Phe178, Thr315 to Tyr335, Val369 to Val389, Trp410 to Val430, Met439 to Phe459, and Ala470 to Leu490.

It belongs to the XK family.

The protein localises to the cell membrane. The protein is XK-related protein 6 of Mus musculus (Mouse).